The following is a 225-amino-acid chain: Heptaprenylglyceryl phosphate synthase (225 aa).

Lys-6 contributes to the sn-glycerol 1-phosphate binding site. 2 residues coordinate Mg(2+): Asp-8 and Thr-34. Sn-glycerol 1-phosphate-binding positions include 153–158 (YIEYSG), Gly-183, and 203–204 (GN).

It belongs to the GGGP/HepGP synthase family. Group I subfamily. In terms of assembly, homodimer. Mg(2+) serves as cofactor.

It catalyses the reaction sn-glycerol 1-phosphate + all-trans-heptaprenyl diphosphate = 3-heptaprenyl-sn-glycero-1-phosphate + diphosphate. Its pathway is membrane lipid metabolism; glycerophospholipid metabolism. In terms of biological role, prenyltransferase that catalyzes in vivo the transfer of the heptaprenyl moiety of heptaprenyl pyrophosphate (HepPP; 35 carbon atoms) to the C3 hydroxyl of sn-glycerol-1-phosphate (G1P), producing heptaprenylglyceryl phosphate (HepGP). This reaction is an ether-bond-formation step in the biosynthesis of archaea-type G1P-based membrane lipids found in Bacillales. The sequence is that of Heptaprenylglyceryl phosphate synthase from Listeria welshimeri serovar 6b (strain ATCC 35897 / DSM 20650 / CCUG 15529 / CIP 8149 / NCTC 11857 / SLCC 5334 / V8).